A 230-amino-acid polypeptide reads, in one-letter code: MVRGKTQMKRIENPTSRQVTFSKRRNGLLKKAFELSVLCDAEVALIVFSPRGKLYEFASASTQKTIERYRTYTKENIGNKTVQQDIEQVKADADGLAKKLEALETYKRKLLGEKLDECSIEELHSLEVKLERSLISIRGRKTKLLEEQVAKLREKEMKLRKDNEELREKCKNQPPLSAPLTVRAEDENPDRNINTTNDNMDVETELFIGLPGRSRSSGGAAEDSQAMPHS.

One can recognise an MADS-box domain in the interval 1–61 (MVRGKTQMKR…GKLYEFASAS (61 aa)). The 91-residue stretch at 86-176 (IEQVKADADG…REKCKNQPPL (91 aa)) folds into the K-box domain. Positions 209–230 (GLPGRSRSSGGAAEDSQAMPHS) are disordered.

As to expression, expressed in mature leaves and at low levels in roots and young panicles.

It is found in the nucleus. Probable transcription factor active in flowering time control. May control internode elongation and promote floral transition phase. May act upstream of the floral regulators MADS1, MADS14, MADS15 and MADS18 in the floral induction pathway. This chain is MADS-box transcription factor 50 (MADS50), found in Oryza sativa subsp. japonica (Rice).